Consider the following 1209-residue polypeptide: Protein phosphatase 1 regulatory subunit 26 (1209 aa).

Disordered regions lie at residues D57–K91, S145–G279, K291–S471, G501–D532, G555–D694, E733–S836, K848–Q1033, R1052–S1072, and A1118–V1209. Basic and acidic residues predominate over residues T63–K91. Low complexity predominate over residues Q201–D219. A compositionally biased stretch (basic and acidic residues) spans I226 to T255. The span at Q301–P321 shows a compositional bias: polar residues. A compositionally biased stretch (low complexity) spans S352–S362. Residues D442–K454 show a composition bias toward basic and acidic residues. Composition is skewed to basic and acidic residues over residues K609 to L637, K667 to S685, and S757 to G766. 2 stretches are compositionally biased toward low complexity: residues P821–S836 and S852–E861. S1161 is subject to Phosphoserine. Positions G1187 to V1209 are enriched in low complexity.

Interacts with UTP20 and PPP1CA. As to expression, ubiquitous in normal tissues. Expressed in numerous adenocarcinoma cell lines.

It localises to the nucleus. It is found in the nucleolus. Its function is as follows. Inhibits phosphatase activity of protein phosphatase 1 (PP1) complexes. May positively regulate cell proliferation. The chain is Protein phosphatase 1 regulatory subunit 26 (PPP1R26) from Homo sapiens (Human).